The chain runs to 119 residues: Large ribosomal subunit protein bL20c (119 aa).

This sequence belongs to the bacterial ribosomal protein bL20 family.

It is found in the plastid. The protein resides in the chloroplast. Binds directly to 23S ribosomal RNA and is necessary for the in vitro assembly process of the 50S ribosomal subunit. It is not involved in the protein synthesizing functions of that subunit. In Brachypodium distachyon (Purple false brome), this protein is Large ribosomal subunit protein bL20c.